We begin with the raw amino-acid sequence, 76 residues long: Protein A9 homolog (76 aa).

An N-terminal signal peptide occupies residues 1–21 (MSCYSSILNSISTLAFLQVAS). The Intravirion portion of the chain corresponds to 23–45 (VIELVRHCIMHFCETRIRCNTLA). A helical transmembrane segment spans residues 46–66 (FVILKILITMVIYFMIGLGLF). Residues 67 to 76 (YLAKNGTEAE) are Virion surface-facing. A glycan (N-linked (GlcNAc...) asparagine; by host) is linked at N71.

The protein belongs to the chordopoxvirinae A9 family.

Its subcellular location is the virion membrane. The protein resides in the host cytoplasm. Functionally, envelope protein. Required for an early step in virion morphogenesis. In Fowlpox virus (strain NVSL) (FPV), this protein is Protein A9 homolog.